Here is a 520-residue protein sequence, read N- to C-terminus: Amine oxidase [flavin-containing] B (520 aa).

S2 carries the post-translational modification N-acetylserine. Over S2–V489 the chain is Cytoplasmic. At K52 the chain carries N6-acetyllysine. C397 carries the S-8alpha-FAD cysteine modification. Residues P490–L516 form a helical; Anchor for type IV membrane protein membrane-spanning segment. Topologically, residues L517–V520 are mitochondrial intermembrane.

It belongs to the flavin monoamine oxidase family. As to quaternary structure, monomer, homo- or heterodimer (containing two subunits of similar size). Each subunit contains a covalently bound flavin. Enzymatically active as monomer. The cofactor is FAD.

It localises to the mitochondrion outer membrane. The catalysed reaction is a secondary aliphatic amine + O2 + H2O = a primary amine + an aldehyde + H2O2. It carries out the reaction (R)-adrenaline + O2 + H2O = (R)-3,4-dihydroxymandelaldehyde + methylamine + H2O2. The enzyme catalyses a primary methyl amine + O2 + H2O = an aldehyde + H2O2 + NH4(+). It catalyses the reaction benzylamine + O2 + H2O = benzaldehyde + H2O2 + NH4(+). The catalysed reaction is dopamine + O2 + H2O = 3,4-dihydroxyphenylacetaldehyde + H2O2 + NH4(+). It carries out the reaction tyramine + O2 + H2O = (4-hydroxyphenyl)acetaldehyde + H2O2 + NH4(+). The enzyme catalyses (R)-noradrenaline + O2 + H2O = (R)-3,4-dihydroxymandelaldehyde + H2O2 + NH4(+). It catalyses the reaction 2-phenylethylamine + O2 + H2O = 2-phenylacetaldehyde + H2O2 + NH4(+). The catalysed reaction is N-acetylputrescine + O2 + H2O = 4-acetamidobutanal + H2O2 + NH4(+). In terms of biological role, catalyzes the oxidative deamination of primary and some secondary amines such as neurotransmitters, and exogenous amines including the tertiary amine, neurotoxin 1-methyl-4-phenyl-1,2,3,6-tetrahydropyridine (MPTP), with concomitant reduction of oxygen to hydrogen peroxide and participates in the metabolism of neuroactive and vasoactive amines in the central nervous system and peripheral tissues. Preferentially degrades benzylamine and phenylethylamine. The chain is Amine oxidase [flavin-containing] B from Sus scrofa (Pig).